Reading from the N-terminus, the 142-residue chain is Mitochondrial import receptor subunit TOM22 homolog (142 aa).

Low complexity predominate over residues 1–18; that stretch reads MAAAVAAAGAGEPLSPEE. The interval 1–41 is disordered; the sequence is MAAAVAAAGAGEPLSPEELLPKAEAEKAEEELEEDDDDELD. Ala-2 bears the N-acetylalanine mark. At 2–83 the chain is on the cytoplasmic side; it reads AAAVAAAGAG…AQKMYRFSRA (82 aa). A Phosphoserine modification is found at Ser-15. Over residues 27-41 the composition is skewed to acidic residues; it reads KAEEELEEDDDDELD. The interval 41–50 is import sequence; necessary for mitochondrion outer membrane localization and integration in the TOM complex; sequence DETLSERLWG. Residue Thr-43 is modified to Phosphothreonine. Residue Ser-45 is modified to Phosphoserine. The tract at residues 83–103 is TMD; necessary for mitochondrion outer membrane localization and integration in the TOM complex; it reads AALWIGTTSFMILVLPVVFET. A helical transmembrane segment spans residues 84–103; sequence ALWIGTTSFMILVLPVVFET. Residues 104-142 lie on the Mitochondrial intermembrane side of the membrane; sequence EKLQMEQQQQLQQRQILLGPNTGLSGGMPGALPPLPGKM. Residues 123–142 are C-tail signal; necessary for mitochondrion outer membrane localization and integration in the TOM complex; it reads PNTGLSGGMPGALPPLPGKM.

The protein belongs to the Tom22 family. As to quaternary structure, forms part of the preprotein translocase complex of the outer mitochondrial membrane (TOM complex) which consists of at least 7 different proteins (TOMM5, TOMM6, TOMM7, TOMM20, TOMM22, TOMM40 and TOMM70). Interacts with PPP2R2B and TOMM40.

Its subcellular location is the mitochondrion outer membrane. Its function is as follows. Central receptor component of the translocase of the outer membrane of mitochondria (TOM complex) responsible for the recognition and translocation of cytosolically synthesized mitochondrial preproteins. Together with the peripheral receptor TOM20 functions as the transit peptide receptor and facilitates the movement of preproteins into the translocation pore. Required for the translocation across the mitochondrial outer membrane of cytochrome P450 monooxygenases. The polypeptide is Mitochondrial import receptor subunit TOM22 homolog (Tomm22) (Mus musculus (Mouse)).